The following is a 281-amino-acid chain: MAQHLRKPDWLKIRLGGNEQFTKTKSIVESHCLHTICTSGKCPNMGECWSRGTATFMIGGEICTRSCRFCNTLTGKPLPLDPKEPANVAESIRLMNLKHAVITSVDRDDLPDLGASHWVNTIRTIKEVNPQTTVEVLIPDFQGRLDLVDQVVDAAPEIISHNMETVRRISPQVRSAAKYDVSLSVLRRIAERGVVAKTGIMVGLGETEDEVLELMDDVLQAGVSVLTIGQYLQPSRKNIPVSEYVTPERFEYYRQQAVNKGFKKVESAPLVRSSYHAEKHI.

[4Fe-4S] cluster-binding residues include C37, C42, C48, C63, C67, C70, and S274. The region spanning 49–263 is the Radical SAM core domain; that stretch reads WSRGTATFMI…RQQAVNKGFK (215 aa).

It belongs to the radical SAM superfamily. Lipoyl synthase family. The cofactor is [4Fe-4S] cluster.

The protein resides in the cytoplasm. The enzyme catalyses [[Fe-S] cluster scaffold protein carrying a second [4Fe-4S](2+) cluster] + N(6)-octanoyl-L-lysyl-[protein] + 2 oxidized [2Fe-2S]-[ferredoxin] + 2 S-adenosyl-L-methionine + 4 H(+) = [[Fe-S] cluster scaffold protein] + N(6)-[(R)-dihydrolipoyl]-L-lysyl-[protein] + 4 Fe(3+) + 2 hydrogen sulfide + 2 5'-deoxyadenosine + 2 L-methionine + 2 reduced [2Fe-2S]-[ferredoxin]. Its pathway is protein modification; protein lipoylation via endogenous pathway; protein N(6)-(lipoyl)lysine from octanoyl-[acyl-carrier-protein]: step 2/2. Its function is as follows. Catalyzes the radical-mediated insertion of two sulfur atoms into the C-6 and C-8 positions of the octanoyl moiety bound to the lipoyl domains of lipoate-dependent enzymes, thereby converting the octanoylated domains into lipoylated derivatives. This chain is Lipoyl synthase, found in Parabacteroides distasonis (strain ATCC 8503 / DSM 20701 / CIP 104284 / JCM 5825 / NCTC 11152).